The sequence spans 232 residues: Putative homeobox protein NANOG2 (232 aa).

Basic and acidic residues predominate over residues 1–10 (MDLPIEDSHD). Residues 1–39 (MDLPIEDSHDSSTSPKGKQPTTAEKSATKKEDKVPVKKQ) are disordered. Polar residues predominate over residues 11–25 (SSTSPKGKQPTTAEK). Basic and acidic residues predominate over residues 26–35 (SATKKEDKVP). 8 consecutive repeat copies span residues 123 to 127 (WSNQT), 128 to 132 (WNNSI), 133 to 137 (WSNET), 143 to 147 (WSNHS), 148 to 152 (WNTQT), 153 to 157 (WCTQS), 158 to 162 (WNNQA), and 163 to 167 (WNSPF). The interval 123 to 167 (WSNQTWNNSIWSNETQNIQSWSNHSWNTQTWCTQSWNNQAWNSPF) is 8 X repeats starting with a Trp in each unit. Positions 123–167 (WSNQTWNNSIWSNETQNIQSWSNHSWNTQTWCTQSWNNQAWNSPF) are sufficient for transactivation activity. Residues 168–232 (YNCGEESLQS…YSTNMQPEDV (65 aa)) form a sufficient for strong transactivation activity region.

This sequence belongs to the Nanog homeobox family.

The protein localises to the nucleus. Probable transcriptional regulator. The protein is Putative homeobox protein NANOG2 (NANOGP1) of Pan troglodytes (Chimpanzee).